Reading from the N-terminus, the 259-residue chain is Aliphatic sulfonates import ATP-binding protein SsuB 1 (259 aa).

An ABC transporter domain is found at 15 to 229 (VECRRITRRF…QASTPGFQAL (215 aa)). 47 to 54 (GSSGSGKT) lines the ATP pocket.

The protein belongs to the ABC transporter superfamily. Aliphatic sulfonates importer (TC 3.A.1.17.2) family. As to quaternary structure, the complex is composed of two ATP-binding proteins (SsuB), two transmembrane proteins (SsuC) and a solute-binding protein (SsuA).

Its subcellular location is the cell inner membrane. It carries out the reaction ATP + H2O + aliphatic sulfonate-[sulfonate-binding protein]Side 1 = ADP + phosphate + aliphatic sulfonateSide 2 + [sulfonate-binding protein]Side 1.. Its function is as follows. Part of the ABC transporter complex SsuABC involved in aliphatic sulfonates import. Responsible for energy coupling to the transport system. The polypeptide is Aliphatic sulfonates import ATP-binding protein SsuB 1 (Pseudomonas fluorescens (strain ATCC BAA-477 / NRRL B-23932 / Pf-5)).